The primary structure comprises 237 residues: Fibroblast growth factor 3 (237 aa).

The first 21 residues, 1-21 (MVIIWILLLSFISCGPQVSWA), serve as a signal peptide directing secretion. Asn83 carries an N-linked (GlcNAc...) asparagine glycan.

The protein belongs to the heparin-binding growth factors family.

Its function is as follows. Plays an important role in the regulation of embryonic development, cell proliferation, and cell differentiation. This is Fibroblast growth factor 3 (fgf3) from Xenopus laevis (African clawed frog).